The chain runs to 778 residues: Putative ATP-dependent RNA helicase MJ1505 (778 aa).

Positions 22–186 constitute a Helicase ATP-binding domain; that stretch reads IAANALKKKT…EICENLGIEH (165 aa). 35 to 42 contacts ATP; that stretch reads LSTGLGKT. Positions 137–140 match the DEAH box motif; the sequence is DEAH. One can recognise a Helicase C-terminal domain in the interval 338–516; it reads KVVDMVKNIL…EIKEETEEIK (179 aa).

The protein belongs to the DEAD box helicase family. DEAH subfamily.

It catalyses the reaction ATP + H2O = ADP + phosphate + H(+). In Methanocaldococcus jannaschii (strain ATCC 43067 / DSM 2661 / JAL-1 / JCM 10045 / NBRC 100440) (Methanococcus jannaschii), this protein is Putative ATP-dependent RNA helicase MJ1505.